Here is a 245-residue protein sequence, read N- to C-terminus: Enolase-phosphatase E1 (245 aa).

It belongs to the HAD-like hydrolase superfamily. MasA/MtnC family. Monomer. Mg(2+) serves as cofactor.

The enzyme catalyses 5-methylsulfanyl-2,3-dioxopentyl phosphate + H2O = 1,2-dihydroxy-5-(methylsulfanyl)pent-1-en-3-one + phosphate. Its pathway is amino-acid biosynthesis; L-methionine biosynthesis via salvage pathway; L-methionine from S-methyl-5-thio-alpha-D-ribose 1-phosphate: step 3/6. It participates in amino-acid biosynthesis; L-methionine biosynthesis via salvage pathway; L-methionine from S-methyl-5-thio-alpha-D-ribose 1-phosphate: step 4/6. Bifunctional enzyme that catalyzes the enolization of 2,3-diketo-5-methylthiopentyl-1-phosphate (DK-MTP-1-P) into the intermediate 2-hydroxy-3-keto-5-methylthiopentenyl-1-phosphate (HK-MTPenyl-1-P), which is then dephosphorylated to form the acireductone 1,2-dihydroxy-3-keto-5-methylthiopentene (DHK-MTPene). This chain is Enolase-phosphatase E1, found in Prochlorococcus marinus (strain MIT 9313).